Consider the following 477-residue polypeptide: Stromelysin-1 (477 aa).

Positions 1–17 are cleaved as a signal peptide; that stretch reads MKNLPILLLLCVAACSA. A propeptide spans 18-99 (activation peptide); sequence YPLDRSARDE…SRCGVPDVGH (82 aa). The Cysteine switch signature appears at 90 to 97; the sequence is SRCGVPDV. Cys-92 is a binding site for Zn(2+). N-linked (GlcNAc...) asparagine glycosylation occurs at Asn-120. Asp-124 and Asp-158 together coordinate Ca(2+). Zn(2+) is bound by residues His-168 and Asp-170. Residues Asp-175, Gly-176, Gly-178, and Val-180 each coordinate Ca(2+). His-183 contributes to the Zn(2+) binding site. Residues Gly-190, Asn-192, and Asp-194 each contribute to the Ca(2+) site. Residue His-196 participates in Zn(2+) binding. 3 residues coordinate Ca(2+): Asp-198, Asp-199, and Glu-201. Zn(2+) is bound at residue His-218. Residue Glu-219 is part of the active site. Residues His-222 and His-228 each coordinate Zn(2+). A disordered region spans residues 260–285; the sequence is QSLYGPPPASPDSPVEPSEPEPPAPG. Hemopexin repeat units follow at residues 287–336, 337–383, 385–433, and 434–477; these read LAMC…WPSL, PSGI…GFPP, VRKI…FPGI, and DSKL…WFNC. Cys-290 and Cys-477 are oxidised to a cystine. Asp-297 contributes to the Ca(2+) binding site. Asp-389 and Asp-438 together coordinate Ca(2+).

This sequence belongs to the peptidase M10A family. Ca(2+) serves as cofactor. Requires Zn(2+) as cofactor.

It is found in the secreted. The protein resides in the extracellular space. The protein localises to the extracellular matrix. The catalysed reaction is Preferential cleavage where P1', P2' and P3' are hydrophobic residues.. Its function is as follows. Metalloproteinase with a rather broad substrate specificity that can degrade fibronectin, laminin, gelatins of type I, III, IV, and V; collagens III, IV, X, and IX, and cartilage proteoglycans. Activates different molecules including growth factors, plasminogen or other matrix metalloproteinases such as MMP9. Once released into the extracellular matrix (ECM), the inactive pro-enzyme is activated by the plasmin cascade signaling pathway. Also acts intracellularly. For example, in dopaminergic neurons, gets activated by the serine protease HTRA2 upon stress and plays a pivotal role in DA neuronal degeneration by mediating microglial activation and alpha-synuclein/SNCA cleavage. In addition, plays a role in immune response and possesses antiviral activity against various viruses. Mechanistically, translocates from the cytoplasm into the cell nucleus upon virus infection to influence NF-kappa-B activities. This is Stromelysin-1 (MMP3) from Equus caballus (Horse).